The following is a 609-amino-acid chain: Glutamine--fructose-6-phosphate aminotransferase [isomerizing] (609 aa).

Residue cysteine 2 is the Nucleophile; for GATase activity of the active site. Residues cysteine 2–aspartate 217 enclose the Glutamine amidotransferase type-2 domain. SIS domains lie at alanine 285–alanine 425 and tryptophan 458–proline 599. Lysine 604 acts as the For Fru-6P isomerization activity in catalysis.

As to quaternary structure, homodimer.

Its subcellular location is the cytoplasm. The enzyme catalyses D-fructose 6-phosphate + L-glutamine = D-glucosamine 6-phosphate + L-glutamate. Catalyzes the first step in hexosamine metabolism, converting fructose-6P into glucosamine-6P using glutamine as a nitrogen source. This chain is Glutamine--fructose-6-phosphate aminotransferase [isomerizing], found in Xylella fastidiosa (strain 9a5c).